The primary structure comprises 228 residues: 7-cyano-7-deazaguanine synthase (228 aa).

10 to 20 (FSGGQDSTTLA) lines the ATP pocket. Positions 190, 205, 208, and 211 each coordinate Zn(2+).

This sequence belongs to the QueC family. Zn(2+) serves as cofactor.

The enzyme catalyses 7-carboxy-7-deazaguanine + NH4(+) + ATP = 7-cyano-7-deazaguanine + ADP + phosphate + H2O + H(+). It participates in purine metabolism; 7-cyano-7-deazaguanine biosynthesis. Catalyzes the ATP-dependent conversion of 7-carboxy-7-deazaguanine (CDG) to 7-cyano-7-deazaguanine (preQ(0)). The chain is 7-cyano-7-deazaguanine synthase from Helicobacter pylori (strain P12).